The primary structure comprises 156 residues: SPbeta prophage-derived uncharacterized protein YosH (156 aa).

The polypeptide is SPbeta prophage-derived uncharacterized protein YosH (yosH) (Bacillus subtilis (strain 168)).